The chain runs to 260 residues: Dehydrogenase/reductase SDR family member 4 (260 aa).

18–42 (IVTASTDGIGLAIARRLAQDGAHVV) provides a ligand contact to NADP(+). K74 is subject to N6-acetyllysine; alternate. K74 is subject to N6-succinyllysine; alternate. S151 contributes to the substrate binding site. Y164 acts as the Proton acceptor in catalysis. K168 is a binding site for NADP(+). K198 bears the N6-acetyllysine; alternate mark. Position 198 is an N6-succinyllysine; alternate (K198). S202 is modified (phosphoserine). K209 bears the N6-succinyllysine mark. Residues 258-260 (SRL) carry the Peroxisomal targeting signal motif.

It belongs to the short-chain dehydrogenases/reductases (SDR) family. In terms of assembly, homotetramer. In terms of tissue distribution, detected in liver and kidney. Detected at lower levels in heart, lung, spleen, small intestine, testis, brain and stomach.

It is found in the peroxisome. It carries out the reaction a secondary alcohol + NADP(+) = a ketone + NADPH + H(+). It catalyses the reaction 3alpha-hydroxy-5beta-pregnan-20-one + NADP(+) = 5beta-pregnan-3,20-dione + NADPH + H(+). The enzyme catalyses 5beta-dihydrotestosterone + NADPH + H(+) = 5beta-androstane-3alpha,17beta-diol + NADP(+). The catalysed reaction is all-trans-retinol + NADP(+) = all-trans-retinal + NADPH + H(+). It carries out the reaction isatin + NADPH + H(+) = 3-hydroxyindolin-2-one + NADP(+). Its activity is regulated as follows. Inhibited by flavonoids (kaempferol, quercetin, quercitrin, genistein), myristic acid, pyrazole, barbital, phenobarbital and CuSO4. NADPH-dependent oxidoreductase which catalyzes the reduction of a variety of compounds bearing carbonyl groups including ketosteroids, alpha-dicarbonyl compounds, aldehydes, aromatic ketones and quinones. Reduces all-trans-retinal and 9-cis retinal. Reduces 3-ketosteroids and benzil into 3alpha-hydroxysteroids and S-benzoin, respectively, in contrast to the stereoselectivity of primates DHRS4s which produce 3beta-hydroxysteroids and R-benzoin. In the reverse reaction, catalyze the NADP-dependent oxidation of 3alpha-hydroxysteroids and alcohol, but with much lower efficiency. Involved in the metabolism of 3alpha-hydroxysteroids, retinoid, isatin and xenobiotic carbonyl compounds. The chain is Dehydrogenase/reductase SDR family member 4 (DHRS4) from Oryctolagus cuniculus (Rabbit).